The chain runs to 252 residues: uncharacterized protein (252 aa).

Belongs to the methyltransferase superfamily.

This is an uncharacterized protein from Mycobacterium sp. (strain KMS).